The sequence spans 391 residues: GTPase Obg (391 aa).

The region spanning 1–159 is the Obg domain; that stretch reads MKFIDEALIR…RDLQLELMLL (159 aa). One can recognise an OBG-type G domain in the interval 160–333; sequence ADVGMLGLPN…LTRDIMDFIE (174 aa). GTP contacts are provided by residues 166–173, 191–195, 213–216, 283–286, and 314–316; these read GLPNAGKS, FTTLV, DIPG, NKID, and SAA. Mg(2+) contacts are provided by Ser-173 and Thr-193. Residues 361-391 are disordered; sequence QNPITEDDWDDLDDDGWTEEDDEGVEFIYKP. The segment covering 365–385 has biased composition (acidic residues); that stretch reads TEDDWDDLDDDGWTEEDDEGV.

Belongs to the TRAFAC class OBG-HflX-like GTPase superfamily. OBG GTPase family. Monomer. Mg(2+) serves as cofactor.

The protein localises to the cytoplasm. In terms of biological role, an essential GTPase which binds GTP, GDP and possibly (p)ppGpp with moderate affinity, with high nucleotide exchange rates and a fairly low GTP hydrolysis rate. Plays a role in control of the cell cycle, stress response, ribosome biogenesis and in those bacteria that undergo differentiation, in morphogenesis control. This chain is GTPase Obg, found in Glaesserella parasuis serovar 5 (strain SH0165) (Haemophilus parasuis).